A 149-amino-acid polypeptide reads, in one-letter code: D-aminoacyl-tRNA deacylase (149 aa).

Residues 139 to 140 carry the Gly-cisPro motif, important for rejection of L-amino acids motif; it reads GP.

The protein belongs to the DTD family. In terms of assembly, homodimer.

The protein localises to the cytoplasm. It carries out the reaction glycyl-tRNA(Ala) + H2O = tRNA(Ala) + glycine + H(+). The catalysed reaction is a D-aminoacyl-tRNA + H2O = a tRNA + a D-alpha-amino acid + H(+). In terms of biological role, an aminoacyl-tRNA editing enzyme that deacylates mischarged D-aminoacyl-tRNAs. Also deacylates mischarged glycyl-tRNA(Ala), protecting cells against glycine mischarging by AlaRS. Acts via tRNA-based rather than protein-based catalysis; rejects L-amino acids rather than detecting D-amino acids in the active site. By recycling D-aminoacyl-tRNA to D-amino acids and free tRNA molecules, this enzyme counteracts the toxicity associated with the formation of D-aminoacyl-tRNA entities in vivo and helps enforce protein L-homochirality. This chain is D-aminoacyl-tRNA deacylase (DTD1), found in Candida glabrata (strain ATCC 2001 / BCRC 20586 / JCM 3761 / NBRC 0622 / NRRL Y-65 / CBS 138) (Yeast).